The primary structure comprises 244 residues: Ureidoacrylate amidohydrolase RutB (244 aa).

Asp38 acts as the Proton acceptor in catalysis. Lys147 is an active-site residue. Cys180 (nucleophile) is an active-site residue.

This sequence belongs to the isochorismatase family. RutB subfamily.

The enzyme catalyses (Z)-3-ureidoacrylate + H2O + H(+) = (Z)-3-aminoacrylate + NH4(+) + CO2. It carries out the reaction (Z)-3-ureidoacrylate + H2O = (Z)-3-aminoacrylate + carbamate + H(+). The catalysed reaction is (Z)-2-methylureidoacrylate + H2O + H(+) = (Z)-2-methylaminoacrylate + NH4(+) + CO2. Its function is as follows. Hydrolyzes ureidoacrylate to form aminoacrylate and carbamate. The carbamate hydrolyzes spontaneously, thereby releasing one of the nitrogen atoms of the pyrimidine ring as ammonia and one of its carbon atoms as CO2. This chain is Ureidoacrylate amidohydrolase RutB, found in Escherichia coli O1:K1 / APEC.